Consider the following 211-residue polypeptide: Probable nicotinate-nucleotide adenylyltransferase (211 aa).

This sequence belongs to the NadD family.

The catalysed reaction is nicotinate beta-D-ribonucleotide + ATP + H(+) = deamido-NAD(+) + diphosphate. It participates in cofactor biosynthesis; NAD(+) biosynthesis; deamido-NAD(+) from nicotinate D-ribonucleotide: step 1/1. Functionally, catalyzes the reversible adenylation of nicotinate mononucleotide (NaMN) to nicotinic acid adenine dinucleotide (NaAD). The polypeptide is Probable nicotinate-nucleotide adenylyltransferase (Thermoanaerobacter sp. (strain X514)).